A 554-amino-acid chain; its full sequence is Glucose-6-phosphate isomerase (554 aa).

E358 serves as the catalytic Proton donor. Catalysis depends on residues H389 and K515. Residues 527–540 show a composition bias toward polar residues; the sequence is ANNSPAPQSDSSTD. The interval 527-554 is disordered; that stretch reads ANNSPAPQSDSSTDALVRRYRSERGRTS. Residues 542-554 are compositionally biased toward basic and acidic residues; the sequence is LVRRYRSERGRTS.

The protein belongs to the GPI family.

The protein resides in the cytoplasm. It carries out the reaction alpha-D-glucose 6-phosphate = beta-D-fructose 6-phosphate. It participates in carbohydrate biosynthesis; gluconeogenesis. It functions in the pathway carbohydrate degradation; glycolysis; D-glyceraldehyde 3-phosphate and glycerone phosphate from D-glucose: step 2/4. In terms of biological role, catalyzes the reversible isomerization of glucose-6-phosphate to fructose-6-phosphate. This is Glucose-6-phosphate isomerase from Mycolicibacterium paratuberculosis (strain ATCC BAA-968 / K-10) (Mycobacterium paratuberculosis).